The primary structure comprises 291 residues: 4-hydroxy-tetrahydrodipicolinate synthase (291 aa).

Thr44 is a pyruvate binding site. Tyr132 functions as the Proton donor/acceptor in the catalytic mechanism. Lys160 functions as the Schiff-base intermediate with substrate in the catalytic mechanism. Residue Ile202 participates in pyruvate binding.

The protein belongs to the DapA family. Homotetramer; dimer of dimers.

The protein localises to the cytoplasm. It carries out the reaction L-aspartate 4-semialdehyde + pyruvate = (2S,4S)-4-hydroxy-2,3,4,5-tetrahydrodipicolinate + H2O + H(+). It participates in amino-acid biosynthesis; L-lysine biosynthesis via DAP pathway; (S)-tetrahydrodipicolinate from L-aspartate: step 3/4. Its function is as follows. Catalyzes the condensation of (S)-aspartate-beta-semialdehyde [(S)-ASA] and pyruvate to 4-hydroxy-tetrahydrodipicolinate (HTPA). This chain is 4-hydroxy-tetrahydrodipicolinate synthase, found in Sphingopyxis alaskensis (strain DSM 13593 / LMG 18877 / RB2256) (Sphingomonas alaskensis).